We begin with the raw amino-acid sequence, 71 residues long: Small ribosomal subunit protein bS21 (71 aa).

It belongs to the bacterial ribosomal protein bS21 family.

The protein is Small ribosomal subunit protein bS21 of Hahella chejuensis (strain KCTC 2396).